Here is a 138-residue protein sequence, read N- to C-terminus: Thyrotropin subunit beta (138 aa).

The first 20 residues, 1 to 20 (MTATFLMSLLFGLAFGQTMS), serve as a signal peptide directing secretion. 6 disulfides stabilise this stretch: C22–C72, C36–C87, C39–C125, C47–C103, C51–C105, and C108–C115. The N-linked (GlcNAc...) asparagine glycan is linked to N43. The propeptide occupies 133–138 (LVGFPV).

Belongs to the glycoprotein hormones subunit beta family. Heterodimer of a common alpha chain and a unique beta chain which confers biological specificity to thyrotropin, lutropin, follitropin and gonadotropin.

The protein localises to the secreted. In terms of biological role, indispensable for the control of thyroid structure and metabolism. The polypeptide is Thyrotropin subunit beta (TSHB) (Monodelphis domestica (Gray short-tailed opossum)).